The primary structure comprises 433 residues: Serine--tRNA ligase (433 aa).

L-serine is bound at residue 235–237; that stretch reads TSE. Residue 266–268 participates in ATP binding; sequence RSE. Glu-289 contributes to the L-serine binding site. 353 to 356 lines the ATP pocket; it reads EISS. L-serine is bound at residue Ser-388.

Belongs to the class-II aminoacyl-tRNA synthetase family. Type-1 seryl-tRNA synthetase subfamily. Homodimer. The tRNA molecule binds across the dimer.

The protein resides in the cytoplasm. It carries out the reaction tRNA(Ser) + L-serine + ATP = L-seryl-tRNA(Ser) + AMP + diphosphate + H(+). The enzyme catalyses tRNA(Sec) + L-serine + ATP = L-seryl-tRNA(Sec) + AMP + diphosphate + H(+). The protein operates within aminoacyl-tRNA biosynthesis; selenocysteinyl-tRNA(Sec) biosynthesis; L-seryl-tRNA(Sec) from L-serine and tRNA(Sec): step 1/1. Catalyzes the attachment of serine to tRNA(Ser). Is also able to aminoacylate tRNA(Sec) with serine, to form the misacylated tRNA L-seryl-tRNA(Sec), which will be further converted into selenocysteinyl-tRNA(Sec). In Burkholderia ambifaria (strain MC40-6), this protein is Serine--tRNA ligase.